Here is a 551-residue protein sequence, read N- to C-terminus: Chaperonin GroEL 4 (551 aa).

Residues 30 to 33 (TLGP), Lys-51, 87 to 91 (DGTTT), Gly-415, and Asp-495 each bind ATP.

This sequence belongs to the chaperonin (HSP60) family. In terms of assembly, forms a cylinder of 14 subunits composed of two heptameric rings stacked back-to-back. Interacts with the co-chaperonin GroES.

Its subcellular location is the cytoplasm. The catalysed reaction is ATP + H2O + a folded polypeptide = ADP + phosphate + an unfolded polypeptide.. Functionally, together with its co-chaperonin GroES, plays an essential role in assisting protein folding. The GroEL-GroES system forms a nano-cage that allows encapsulation of the non-native substrate proteins and provides a physical environment optimized to promote and accelerate protein folding. The chain is Chaperonin GroEL 4 from Mesorhizobium japonicum (strain LMG 29417 / CECT 9101 / MAFF 303099) (Mesorhizobium loti (strain MAFF 303099)).